Reading from the N-terminus, the 92-residue chain is Exodeoxyribonuclease 7 small subunit (92 aa).

Over residues 71–84 the composition is skewed to low complexity; that stretch reads AESAGTAKSAVAAD. Residues 71–92 form a disordered region; the sequence is AESAGTAKSAVAADSRGAADSA.

The protein belongs to the XseB family. As to quaternary structure, heterooligomer composed of large and small subunits.

It localises to the cytoplasm. It carries out the reaction Exonucleolytic cleavage in either 5'- to 3'- or 3'- to 5'-direction to yield nucleoside 5'-phosphates.. Bidirectionally degrades single-stranded DNA into large acid-insoluble oligonucleotides, which are then degraded further into small acid-soluble oligonucleotides. The chain is Exodeoxyribonuclease 7 small subunit from Leifsonia xyli subsp. xyli (strain CTCB07).